We begin with the raw amino-acid sequence, 156 residues long: Snaclec A10 (156 aa).

Residues M1–A23 form the signal peptide. 3 cysteine pairs are disulfide-bonded: C27/C38, C55/C154, and C129/C146. Residues Y34–E155 form the C-type lectin domain.

This sequence belongs to the snaclec family. Heterodimer; disulfide-linked. As to expression, expressed by the venom gland.

It is found in the secreted. Interferes with one step of hemostasis (modulation of platelet aggregation, or coagulation cascade, for example). The polypeptide is Snaclec A10 (Macrovipera lebetinus (Levantine viper)).